A 284-amino-acid polypeptide reads, in one-letter code: AAAAVPRRGPRGGPGRSYTADAGYAPATPAAAGAAAGKATTEEQKLIEDINVGFKAAVAAAASVPAADKFKTFEAAFTSSSKAAAAKAPGLVPKLDAAYSVAYKAAVGATPEAKFDSFVASLTEALRVIAGALEVHAVKPVTEEPGMAKIPAGELQIIDKIDAAFKVAATAAATAPADDKFTVFEAAFNKAIKESTGGAYDTYKCIPSLEAAVKQAYAATVAAAPQVKYAVFEAALTKAITAMSEVQKVSQPATGAATVAAGAATTAAGAASGAATVAAGGYKV.

The signal sequence occupies residues 1-19 (AAAAVPRRGPRGGPGRSYT). The tract at residues 1-21 (AAAAVPRRGPRGGPGRSYTAD) is disordered.

It belongs to the Poa p IX/Phl p VI allergen family. As to quaternary structure, homodimer; disulfide-linked.

Its function is as follows. Has ribonuclease activity. May be involved in host-pathogen interactions. The sequence is that of Pollen allergen Phl p 5b from Phleum pratense (Common timothy).